The following is a 159-amino-acid chain: Biogenesis of lysosome-related organelles complex 1 subunit 2 (159 aa).

The interval 1–37 is disordered; sequence MDKPTTSAAAAAAQDSNLLPDSPQHGPTLSSASSFEA. A compositionally biased stretch (polar residues) spans 14 to 36; the sequence is QDSNLLPDSPQHGPTLSSASSFE. Residues 69 to 134 adopt a coiled-coil conformation; the sequence is EDYKLLEEMN…KLEAAAYKLD (66 aa).

The protein belongs to the BLOC1S2 family. In terms of assembly, homodimer. Component of the biogenesis of lysosome-related organelles complex-1 (BLOC-1) composed of Blos1, Blos2, Blos3, Blos4, Dysb, Muted, Pldn and Snapin. Interacts with Snapin.

Its function is as follows. Component of the biogenesis of lysosome-related organelles complex-1 (BLOC-1) involved in pigment granule biogenesis. The chain is Biogenesis of lysosome-related organelles complex 1 subunit 2 from Drosophila melanogaster (Fruit fly).